We begin with the raw amino-acid sequence, 405 residues long: MFTLARVLNNIGSASSNEPIPYCLICSEVADGNHFGVAAACRACAAFFRRTVQHNKIHECGRNGQCFFLSCKFLLVGFQISPLSSDARSMCKACRYGKCLEMGMQRSSVQQRREQLGKRLNISDDRGKPVLNKLRRAYEMLILNRKHVHNRRENQAPRAIGFNELPIVFQNESTSIYQFLWEAFPEYSMLLPDTKLAFFKNFFLSFCLFESSFNGCSAKQKNVMLIPSGDYIDLAHSESFFTNDHQTFTERDNIEILAQRLKLIQSSITVPLSAENVDIYEFLALAGIILLESDSESEADFQEEAVKIKSNIIKDLLFHYQCINIYDDAAMRLGAVLSILPSIQVCCSRSNNFLIINSKDVSESQSPFSRIHGNQKYAQFVRSSQESLRHVLANFIKFICKFVSI.

The nuclear receptor DNA-binding region spans 20–111; the sequence is IPYCLICSEV…MGMQRSSVQQ (92 aa). 2 consecutive NR C4-type zinc fingers follow at residues 23–44 and 60–94; these read CLICSEVADGNHFGVAAACRAC and CGRNGQCFFLSCKFLLVGFQISPLSSDARSMCKAC. The NR LBD domain maps to 126–376; the sequence is RGKPVLNKLR…PFSRIHGNQK (251 aa).

The protein belongs to the nuclear hormone receptor family.

The protein resides in the nucleus. Its function is as follows. Orphan nuclear receptor. The sequence is that of Nuclear hormone receptor family member nhr-199 (nhr-199) from Caenorhabditis elegans.